The primary structure comprises 281 residues: 1-acyl-sn-glycerol-3-phosphate acyltransferase (281 aa).

3 helical membrane-spanning segments follow: residues 40-60, 71-91, and 110-130; these read IFVC…IMVL, LGNL…GIPI, and ASPI…VGVA. Positions 109–114 match the HXXXXD motif motif; it reads HASPID.

This sequence belongs to the 1-acyl-sn-glycerol-3-phosphate acyltransferase family.

It is found in the membrane. It carries out the reaction a 1-acyl-sn-glycero-3-phosphate + an acyl-CoA = a 1,2-diacyl-sn-glycero-3-phosphate + CoA. Its pathway is phospholipid metabolism; CDP-diacylglycerol biosynthesis; CDP-diacylglycerol from sn-glycerol 3-phosphate: step 2/3. In terms of biological role, converts lysophosphatidic acid (LPA) into phosphatidic acid by incorporating acyl moiety at the 2 position. This enzyme uses erucoyl-CoA as an acyl donor. The polypeptide is 1-acyl-sn-glycerol-3-phosphate acyltransferase (PLSC) (Limnanthes douglasii (Douglas' meadowfoam)).